Reading from the N-terminus, the 603-residue chain is Probable potassium transport system protein Kup (603 aa).

The next 12 helical transmembrane spans lie at 15–35 (GLVF…IFLL), 43–63 (IIGV…VEYA), 94–114 (VAFV…DGVI), 135–155 (NIGQ…LFSV), 163–183 (ITWV…FSGI), 209–229 (GIIG…GEAL), 244–264 (AWRF…AFLI), 283–303 (ILYI…SQAM), 336–356 (IYIS…MLIF), 365–385 (AYGL…TSIF), 390–410 (NITK…FLLS), and 415–435 (IPHG…LILI).

The protein belongs to the HAK/KUP transporter (TC 2.A.72) family.

The protein resides in the cell membrane. It catalyses the reaction K(+)(in) + H(+)(in) = K(+)(out) + H(+)(out). In terms of biological role, transport of potassium into the cell. Likely operates as a K(+):H(+) symporter. The sequence is that of Probable potassium transport system protein Kup from Methanosarcina barkeri (strain Fusaro / DSM 804).